Consider the following 55-residue polypeptide: ATP synthase F(0) complex subunit 8 (55 aa).

Residues 7 to 24 traverse the membrane as a helical segment; it reads SPWFFIMLTTWLTFSLII.

It belongs to the ATPase protein 8 family. Component of the ATP synthase complex composed at least of ATP5F1A/subunit alpha, ATP5F1B/subunit beta, ATP5MC1/subunit c (homooctomer), MT-ATP6/subunit a, MT-ATP8/subunit 8, ATP5ME/subunit e, ATP5MF/subunit f, ATP5MG/subunit g, ATP5MK/subunit k, ATP5MJ/subunit j, ATP5F1C/subunit gamma, ATP5F1D/subunit delta, ATP5F1E/subunit epsilon, ATP5PF/subunit F6, ATP5PB/subunit b, ATP5PD/subunit d, ATP5PO/subunit OSCP. ATP synthase complex consists of a soluble F(1) head domain (subunits alpha(3) and beta(3)) - the catalytic core - and a membrane F(0) domain - the membrane proton channel (subunits c, a, 8, e, f, g, k and j). These two domains are linked by a central stalk (subunits gamma, delta, and epsilon) rotating inside the F1 region and a stationary peripheral stalk (subunits F6, b, d, and OSCP).

Its subcellular location is the mitochondrion membrane. Subunit 8, of the mitochondrial membrane ATP synthase complex (F(1)F(0) ATP synthase or Complex V) that produces ATP from ADP in the presence of a proton gradient across the membrane which is generated by electron transport complexes of the respiratory chain. ATP synthase complex consist of a soluble F(1) head domain - the catalytic core - and a membrane F(1) domain - the membrane proton channel. These two domains are linked by a central stalk rotating inside the F(1) region and a stationary peripheral stalk. During catalysis, ATP synthesis in the catalytic domain of F(1) is coupled via a rotary mechanism of the central stalk subunits to proton translocation. In vivo, can only synthesize ATP although its ATP hydrolase activity can be activated artificially in vitro. Part of the complex F(0) domain. The protein is ATP synthase F(0) complex subunit 8 of Columbina passerina (Common ground-dove).